Consider the following 607-residue polypeptide: UvrABC system protein C (607 aa).

The region spanning Ala-16–Ile-94 is the GIY-YIG domain. Residues Gln-203 to Val-238 form the UVR domain.

This sequence belongs to the UvrC family. Interacts with UvrB in an incision complex.

It is found in the cytoplasm. Its function is as follows. The UvrABC repair system catalyzes the recognition and processing of DNA lesions. UvrC both incises the 5' and 3' sides of the lesion. The N-terminal half is responsible for the 3' incision and the C-terminal half is responsible for the 5' incision. The polypeptide is UvrABC system protein C (Pseudomonas putida (strain W619)).